A 139-amino-acid polypeptide reads, in one-letter code: Small ribosomal subunit protein uS12 (139 aa).

Residues 1 to 21 (MSTVSQLIKKRRSSKTSKTKA) form a disordered region. The span at 8–18 (IKKRRSSKTSK) shows a compositional bias: basic residues.

This sequence belongs to the universal ribosomal protein uS12 family. Part of the 30S ribosomal subunit. Contacts proteins S8 and S17. May interact with IF1 in the 30S initiation complex.

Its function is as follows. With S4 and S5 plays an important role in translational accuracy. In terms of biological role, interacts with and stabilizes bases of the 16S rRNA that are involved in tRNA selection in the A site and with the mRNA backbone. Located at the interface of the 30S and 50S subunits, it traverses the body of the 30S subunit contacting proteins on the other side and probably holding the rRNA structure together. The combined cluster of proteins S8, S12 and S17 appears to hold together the shoulder and platform of the 30S subunit. In Onion yellows phytoplasma (strain OY-M), this protein is Small ribosomal subunit protein uS12.